We begin with the raw amino-acid sequence, 177 residues long: Isopentenyl-diphosphate Delta-isomerase (177 aa).

Mn(2+)-binding residues include H22 and H28. Residues 26–160 (LRHMAISVFV…PERFTPWLRI (135 aa)) enclose the Nudix hydrolase domain. Residue C62 is part of the active site. H64 is a Mn(2+) binding site. E82 contacts Mg(2+). 2 residues coordinate Mn(2+): E108 and E110. E110 is a catalytic residue.

The protein belongs to the IPP isomerase type 1 family. Requires Mg(2+) as cofactor. It depends on Mn(2+) as a cofactor.

It localises to the cytoplasm. The catalysed reaction is isopentenyl diphosphate = dimethylallyl diphosphate. It functions in the pathway isoprenoid biosynthesis; dimethylallyl diphosphate biosynthesis; dimethylallyl diphosphate from isopentenyl diphosphate: step 1/1. It participates in porphyrin-containing compound metabolism; chlorophyll biosynthesis. Catalyzes the 1,3-allylic rearrangement of the homoallylic substrate isopentenyl (IPP) to its highly electrophilic allylic isomer, dimethylallyl diphosphate (DMAPP). This Cereibacter sphaeroides (strain ATCC 17029 / ATH 2.4.9) (Rhodobacter sphaeroides) protein is Isopentenyl-diphosphate Delta-isomerase.